Consider the following 422-residue polypeptide: Exodeoxyribonuclease 7 large subunit (422 aa).

It belongs to the XseA family. In terms of assembly, heterooligomer composed of large and small subunits.

The protein localises to the cytoplasm. The catalysed reaction is Exonucleolytic cleavage in either 5'- to 3'- or 3'- to 5'-direction to yield nucleoside 5'-phosphates.. Its function is as follows. Bidirectionally degrades single-stranded DNA into large acid-insoluble oligonucleotides, which are then degraded further into small acid-soluble oligonucleotides. This chain is Exodeoxyribonuclease 7 large subunit, found in Leptospira interrogans serogroup Icterohaemorrhagiae serovar copenhageni (strain Fiocruz L1-130).